The sequence spans 339 residues: Ferredoxin--NADP reductase (339 aa).

The FAD site is built by aspartate 36, glutamine 44, tyrosine 49, valine 89, phenylalanine 123, aspartate 290, and threonine 331.

Belongs to the ferredoxin--NADP reductase type 2 family. As to quaternary structure, homodimer. It depends on FAD as a cofactor.

The enzyme catalyses 2 reduced [2Fe-2S]-[ferredoxin] + NADP(+) + H(+) = 2 oxidized [2Fe-2S]-[ferredoxin] + NADPH. This chain is Ferredoxin--NADP reductase, found in Acidiphilium cryptum (strain JF-5).